We begin with the raw amino-acid sequence, 162 residues long: Phosphopantetheine adenylyltransferase (162 aa).

Serine 9 provides a ligand contact to substrate. Residues 9-10 and histidine 17 contribute to the ATP site; that span reads SF. 3 residues coordinate substrate: lysine 41, leucine 73, and lysine 87. ATP is bound by residues 88–90, glutamate 98, and 123–129; these read GLR and CSFLSSS.

Belongs to the bacterial CoaD family. As to quaternary structure, homohexamer. Requires Mg(2+) as cofactor.

The protein localises to the cytoplasm. It carries out the reaction (R)-4'-phosphopantetheine + ATP + H(+) = 3'-dephospho-CoA + diphosphate. It participates in cofactor biosynthesis; coenzyme A biosynthesis; CoA from (R)-pantothenate: step 4/5. In terms of biological role, reversibly transfers an adenylyl group from ATP to 4'-phosphopantetheine, yielding dephospho-CoA (dPCoA) and pyrophosphate. The chain is Phosphopantetheine adenylyltransferase from Natranaerobius thermophilus (strain ATCC BAA-1301 / DSM 18059 / JW/NM-WN-LF).